The sequence spans 449 residues: GTPase Der (449 aa).

2 EngA-type G domains span residues 3-167 and 175-350; these read SIVA…PDEP and TNIA…EQYS. GTP-binding positions include 9 to 16, 56 to 60, 119 to 122, 181 to 188, 228 to 232, and 293 to 296; these read GRPNVGKS, DTGGF, NKVD, DTAGI, and NKWD. The region spanning 351 to 435 is the KH-like domain; it reads RRVTTSELNR…PFRLLFRGRE (85 aa).

The protein belongs to the TRAFAC class TrmE-Era-EngA-EngB-Septin-like GTPase superfamily. EngA (Der) GTPase family. Associates with the 50S ribosomal subunit.

Functionally, GTPase that plays an essential role in the late steps of ribosome biogenesis. The chain is GTPase Der from Trichlorobacter lovleyi (strain ATCC BAA-1151 / DSM 17278 / SZ) (Geobacter lovleyi).